The chain runs to 622 residues: 1-deoxy-D-xylulose-5-phosphate synthase (622 aa).

Thiamine diphosphate-binding positions include His80 and 121–123 (GHS). Asp152 contacts Mg(2+). Thiamine diphosphate contacts are provided by residues 153–154 (GA), Asn181, Tyr288, and Glu370. Residue Asn181 participates in Mg(2+) binding.

This sequence belongs to the transketolase family. DXPS subfamily. As to quaternary structure, homodimer. The cofactor is Mg(2+). It depends on thiamine diphosphate as a cofactor.

It catalyses the reaction D-glyceraldehyde 3-phosphate + pyruvate + H(+) = 1-deoxy-D-xylulose 5-phosphate + CO2. It functions in the pathway metabolic intermediate biosynthesis; 1-deoxy-D-xylulose 5-phosphate biosynthesis; 1-deoxy-D-xylulose 5-phosphate from D-glyceraldehyde 3-phosphate and pyruvate: step 1/1. Functionally, catalyzes the acyloin condensation reaction between C atoms 2 and 3 of pyruvate and glyceraldehyde 3-phosphate to yield 1-deoxy-D-xylulose-5-phosphate (DXP). This Shewanella oneidensis (strain ATCC 700550 / JCM 31522 / CIP 106686 / LMG 19005 / NCIMB 14063 / MR-1) protein is 1-deoxy-D-xylulose-5-phosphate synthase.